Reading from the N-terminus, the 105-residue chain is Large ribosomal subunit protein uL24 (105 aa).

Positions aspartate 75–isoleucine 105 are disordered. Basic residues predominate over residues arginine 94–isoleucine 105.

This sequence belongs to the universal ribosomal protein uL24 family. As to quaternary structure, part of the 50S ribosomal subunit.

Its function is as follows. One of two assembly initiator proteins, it binds directly to the 5'-end of the 23S rRNA, where it nucleates assembly of the 50S subunit. In terms of biological role, one of the proteins that surrounds the polypeptide exit tunnel on the outside of the subunit. This Rhodococcus jostii (strain RHA1) protein is Large ribosomal subunit protein uL24.